A 370-amino-acid chain; its full sequence is 2-aminoethylphosphonate--pyruvate transaminase (370 aa).

An N6-(pyridoxal phosphate)lysine modification is found at lysine 194.

Belongs to the class-V pyridoxal-phosphate-dependent aminotransferase family. PhnW subfamily. As to quaternary structure, homodimer. It depends on pyridoxal 5'-phosphate as a cofactor.

The catalysed reaction is (2-aminoethyl)phosphonate + pyruvate = phosphonoacetaldehyde + L-alanine. In terms of biological role, involved in phosphonate degradation. This is 2-aminoethylphosphonate--pyruvate transaminase from Paraburkholderia phymatum (strain DSM 17167 / CIP 108236 / LMG 21445 / STM815) (Burkholderia phymatum).